The primary structure comprises 433 residues: Adenylosuccinate synthetase (433 aa).

Residues 13–19 (GDEGKGK) and 41–43 (GHT) each bind GTP. Asp-14 serves as the catalytic Proton acceptor. The Mg(2+) site is built by Asp-14 and Gly-41. Residues 14-17 (DEGK), 39-42 (NAGH), Thr-130, Arg-144, Gln-225, Thr-240, and Arg-304 contribute to the IMP site. Catalysis depends on His-42, which acts as the Proton donor. 300 to 306 (STTGRKR) serves as a coordination point for substrate. Residues Arg-306, 332–334 (KLD), and 414–416 (STG) each bind GTP.

The protein belongs to the adenylosuccinate synthetase family. In terms of assembly, homodimer. The cofactor is Mg(2+).

It is found in the cytoplasm. The catalysed reaction is IMP + L-aspartate + GTP = N(6)-(1,2-dicarboxyethyl)-AMP + GDP + phosphate + 2 H(+). The protein operates within purine metabolism; AMP biosynthesis via de novo pathway; AMP from IMP: step 1/2. Its function is as follows. Plays an important role in the de novo pathway of purine nucleotide biosynthesis. Catalyzes the first committed step in the biosynthesis of AMP from IMP. The polypeptide is Adenylosuccinate synthetase (Buchnera aphidicola subsp. Acyrthosiphon pisum (strain APS) (Acyrthosiphon pisum symbiotic bacterium)).